The primary structure comprises 298 residues: Cyclin-dependent kinase 2 homolog (298 aa).

The Protein kinase domain occupies 4–284; that stretch reads YHKMEKIGEG…AKEALKHDYF (281 aa). ATP-binding positions include 10–18 and lysine 32; that span reads IGEGTYGVV. Phosphothreonine is present on threonine 14. Tyrosine 15 carries the phosphotyrosine modification. Aspartate 125 (proton acceptor) is an active-site residue. Threonine 158 bears the Phosphothreonine mark.

Belongs to the protein kinase superfamily. CMGC Ser/Thr protein kinase family. CDC2/CDKX subfamily. In terms of assembly, may form a complex composed of at least the catalytic subunit CRK2 and a cyclin. Mg(2+) is required as a cofactor.

The protein resides in the cytoplasm. The catalysed reaction is L-seryl-[protein] + ATP = O-phospho-L-seryl-[protein] + ADP + H(+). The enzyme catalyses L-threonyl-[protein] + ATP = O-phospho-L-threonyl-[protein] + ADP + H(+). It carries out the reaction [DNA-directed RNA polymerase] + ATP = phospho-[DNA-directed RNA polymerase] + ADP + H(+). Phosphorylation at Thr-14 or Tyr-15 inactivates the enzyme, while phosphorylation at Thr-158 activates it. Functionally, serine/threonine-protein kinase. Involved in the control of the cell cycle. Required for entry into S-phase and mitosis. Probable component of the kinase complex that phosphorylates the repetitive C-terminus of RNA polymerase II. The polypeptide is Cyclin-dependent kinase 2 homolog (Theileria parva (East coast fever infection agent)).